A 193-amino-acid chain; its full sequence is Large ribosomal subunit protein uL11 (193 aa).

This sequence belongs to the universal ribosomal protein uL11 family. Part of the ribosomal stalk of the 50S ribosomal subunit. Interacts with L10 and the large rRNA to form the base of the stalk. L10 forms an elongated spine to which L12 dimers bind in a sequential fashion forming a multimeric L10(L12)X complex. Post-translationally, one or more lysine residues are methylated.

In terms of biological role, forms part of the ribosomal stalk which helps the ribosome interact with GTP-bound translation factors. The polypeptide is Large ribosomal subunit protein uL11 (Mycoplasmopsis synoviae (strain 53) (Mycoplasma synoviae)).